We begin with the raw amino-acid sequence, 880 residues long: Alanine--tRNA ligase (880 aa).

Belongs to the class-II aminoacyl-tRNA synthetase family.

It is found in the cytoplasm. It carries out the reaction tRNA(Ala) + L-alanine + ATP = L-alanyl-tRNA(Ala) + AMP + diphosphate. Its function is as follows. Catalyzes the attachment of alanine to tRNA(Ala) in a two-step reaction: alanine is first activated by ATP to form Ala-AMP and then transferred to the acceptor end of tRNA(Ala). Also edits incorrectly charged Ser-tRNA(Ala) and Gly-tRNA(Ala) via its editing domain. The sequence is that of Alanine--tRNA ligase (alaS) from Lactiplantibacillus plantarum (strain ATCC BAA-793 / NCIMB 8826 / WCFS1) (Lactobacillus plantarum).